The following is a 445-amino-acid chain: Exodeoxyribonuclease 7 large subunit (445 aa).

Belongs to the XseA family. Heterooligomer composed of large and small subunits.

The protein resides in the cytoplasm. The catalysed reaction is Exonucleolytic cleavage in either 5'- to 3'- or 3'- to 5'-direction to yield nucleoside 5'-phosphates.. In terms of biological role, bidirectionally degrades single-stranded DNA into large acid-insoluble oligonucleotides, which are then degraded further into small acid-soluble oligonucleotides. In Xanthomonas oryzae pv. oryzae (strain KACC10331 / KXO85), this protein is Exodeoxyribonuclease 7 large subunit.